Here is a 294-residue protein sequence, read N- to C-terminus: NAD kinase (294 aa).

D72 (proton acceptor) is an active-site residue. NAD(+) is bound by residues 72-73, 146-147, R157, R174, D176, 187-192, and Q247; these read DG, ND, and TAYALS.

Belongs to the NAD kinase family. A divalent metal cation serves as cofactor.

The protein resides in the cytoplasm. It catalyses the reaction NAD(+) + ATP = ADP + NADP(+) + H(+). In terms of biological role, involved in the regulation of the intracellular balance of NAD and NADP, and is a key enzyme in the biosynthesis of NADP. Catalyzes specifically the phosphorylation on 2'-hydroxyl of the adenosine moiety of NAD to yield NADP. In Saccharophagus degradans (strain 2-40 / ATCC 43961 / DSM 17024), this protein is NAD kinase.